We begin with the raw amino-acid sequence, 588 residues long: Adenine deaminase (588 aa).

This sequence belongs to the metallo-dependent hydrolases superfamily. Adenine deaminase family. Homodimer. Mn(2+) is required as a cofactor.

It catalyses the reaction adenine + H2O + H(+) = hypoxanthine + NH4(+). This Escherichia coli O45:K1 (strain S88 / ExPEC) protein is Adenine deaminase.